The chain runs to 702 residues: Arylphorin (702 aa).

The signal sequence occupies residues 1 to 16 (MQTVLFLAALVSLAAA). N-linked (GlcNAc...) asparagine glycans are attached at residues N211 and N481.

This sequence belongs to the hemocyanin family. Hemolymph.

The protein localises to the secreted. Larval storage protein (LSP) which may serve as a store of amino acids for synthesis of adult proteins. Binds the A.niger cell wall component alpha-1,3-glucan, a fungal pathogen-associated molecular pattern (PAMP) that activates the host immune response. This Galleria mellonella (Greater wax moth) protein is Arylphorin (LOC113516268).